We begin with the raw amino-acid sequence, 568 residues long: Probable inactive 1-aminocyclopropane-1-carboxylate synthase-like protein 2 (568 aa).

A disordered region spans residues 1 to 21; the sequence is MSHRSDTLPVPSGQRRGRVPR. The residue at position 395 (Lys395) is an N6-(pyridoxal phosphate)lysine.

It belongs to the class-I pyridoxal-phosphate-dependent aminotransferase family.

This Homo sapiens (Human) protein is Probable inactive 1-aminocyclopropane-1-carboxylate synthase-like protein 2 (ACCSL).